The chain runs to 165 residues: UPF0114 protein ESA_00283 (165 aa).

Helical transmembrane passes span 15–35, 53–73, and 136–156; these read LLAP…VKFF, LILL…LVMV, and LMWY…MGYL.

It belongs to the UPF0114 family.

The protein resides in the cell membrane. This is UPF0114 protein ESA_00283 from Cronobacter sakazakii (strain ATCC BAA-894) (Enterobacter sakazakii).